Reading from the N-terminus, the 330-residue chain is Mas-related G-protein coupled receptor member X2 (330 aa).

The Extracellular segment spans residues 1–33 (MDPTTPAWGTESTTMNGNDQALPLLCGKETLIL). Residues 34 to 54 (VLLILFIALVGLVGNAFVLWL) form a helical membrane-spanning segment. Over 55–63 (LGFRMRRNA) the chain is Cytoplasmic. A helical membrane pass occupies residues 64-84 (FSVYVLSLAGADFLFLCFPMI). At 85–96 (NCLEYLINFFHS) the chain is on the extracellular side. Residues 97–117 (ISINFPSFFTTVMTCAYLAGL) form a helical membrane-spanning segment. Topologically, residues 118–144 (SMLSAISTERCLSVLWPIWYRCRRPRH) are cytoplasmic. Residues 145–165 (LSAVLCVLLWALSLLLSILEG) traverse the membrane as a helical segment. Over 166–184 (KFCGLLFSDGDSGWCQTFD) the chain is Extracellular. Residues 185-205 (FITAAWLMFLFVVLCGSSLAL) traverse the membrane as a helical segment. The Cytoplasmic segment spans residues 206–228 (LVRILCGSQGLPLTRLYLTILLT). A helical membrane pass occupies residues 229 to 249 (VLIFLLCGLPFGIQWFLILWI). Residues 250-264 (WKNSDVLFCHIHPVS) are Extracellular-facing. Residues 265–285 (VVLSSFNSSANPIIYFFVGSF) form a helical membrane-spanning segment. Residues 286–330 (RKQWRLRQPVLKLALQRALQDTAEVDHSEGCFSQGTLEMSGSSLV) are Cytoplasmic-facing.

It belongs to the G-protein coupled receptor 1 family. Mas subfamily.

Its subcellular location is the cell membrane. In terms of biological role, mast cell-specific receptor for basic secretagogues, i.e. cationic amphiphilic drugs, as well as endo- or exogenous peptides, consisting of a basic head group and a hydrophobic core. Recognizes and binds small molecules containing a cyclized tetrahydroisoquinoline (THIQ), such as non-steroidal neuromuscular blocking drugs (NMBDs), including tubocurarine and atracurium. In response to these compounds, mediates pseudo-allergic reactions characterized by histamine release, inflammation and airway contraction. In Rhinopithecus bieti (Black snub-nosed monkey), this protein is Mas-related G-protein coupled receptor member X2 (MRGPRX2).